A 305-amino-acid chain; its full sequence is UDP-3-O-acyl-N-acetylglucosamine deacetylase (305 aa).

Zn(2+)-binding residues include H78, H237, and D241. H264 acts as the Proton donor in catalysis.

This sequence belongs to the LpxC family. It depends on Zn(2+) as a cofactor.

The enzyme catalyses a UDP-3-O-[(3R)-3-hydroxyacyl]-N-acetyl-alpha-D-glucosamine + H2O = a UDP-3-O-[(3R)-3-hydroxyacyl]-alpha-D-glucosamine + acetate. The protein operates within glycolipid biosynthesis; lipid IV(A) biosynthesis; lipid IV(A) from (3R)-3-hydroxytetradecanoyl-[acyl-carrier-protein] and UDP-N-acetyl-alpha-D-glucosamine: step 2/6. In terms of biological role, catalyzes the hydrolysis of UDP-3-O-myristoyl-N-acetylglucosamine to form UDP-3-O-myristoylglucosamine and acetate, the committed step in lipid A biosynthesis. The polypeptide is UDP-3-O-acyl-N-acetylglucosamine deacetylase (Ralstonia pickettii (strain 12J)).